A 420-amino-acid polypeptide reads, in one-letter code: Interleukin-5 receptor subunit alpha (420 aa).

The first 20 residues, 1–20 (MIIVAHVLLILLGATEILQA), serve as a signal peptide directing secretion. The Extracellular portion of the chain corresponds to 21 to 342 (DLLPDEKISL…NDEHKPLREW (322 aa)). One can recognise a Fibronectin type-III 1 domain in the interval 32–123 (PPVNFTIKVT…ASAELHAPPG (92 aa)). Residues Asn35 and Asn131 are each glycosylated (N-linked (GlcNAc...) asparagine). 2 disulfides stabilise this stretch: Cys134/Cys155 and Cys182/Cys196. Asn216 and Asn244 each carry an N-linked (GlcNAc...) asparagine glycan. The region spanning 241-334 (PPLNVTAEIE…WSQPIYVGND (94 aa)) is the Fibronectin type-III 2 domain. Cysteines 269 and 316 form a disulfide. The WSXWS motif signature appears at 322–326 (WSEWS). Residues 343-362 (FVIVIMATICFILLILSLIC) form a helical membrane-spanning segment. Residues 363–420 (KICHLWIKLFPPIPAPKSNIKDLFVTTNYEKAGSSETEIEVICYIEKPGVETLEDSVF) lie on the Cytoplasmic side of the membrane. Residues 371–379 (LFPPIPAPK) carry the Box 1 motif motif.

It belongs to the type I cytokine receptor family. Type 5 subfamily. As to quaternary structure, interacts with IL5. Interacts with CSF2RB. Interacts with JAK2. Interacts with SDCBP. As to expression, expressed on eosinophils and basophils.

It localises to the membrane. Cell surface receptor that plays an important role in the survival, differentiation, and chemotaxis of eosinophils. Acts by forming a heterodimeric receptor with CSF2RB subunit and subsequently binding to interleukin-5. In unstimulated conditions, interacts constitutively with JAK2. Heterodimeric receptor activation leads to JAK2 stimulation and subsequent activation of the JAK-STAT pathway. This is Interleukin-5 receptor subunit alpha (IL5RA) from Homo sapiens (Human).